The sequence spans 503 residues: ESX-5 secretion system protein EccD5 (503 aa).

10 helical membrane passes run 137-157 (VVAVQVGAGMVGTGVILASGV), 169-189 (LTTIFASVIAVLVLMVAMMLL), 200-220 (VADIMLVSGLAPLTVAAASAP), 224-244 (VGSPQAVLGFGVLSIAAALAL), 250-270 (RLAIYTAIVTICGLTTLASLS), 272-292 (MVAATSAVTLFATMLLICVVM), 359-379 (FLSGLLVGLGVLMVVSLTSLC), 414-434 (ITLAVTAVIVVAAVSVRYALV), 443-463 (IVASLLVLLPAAGMTAAAVVP), and 480-500 (YLCLMPIFPLAFWLMNVYAAI).

This sequence belongs to the EccD/Snm4 family. In terms of assembly, part of the ESX-5 / type VII secretion system (T7SS), which is composed of cytosolic and membrane components. The ESX-5 membrane complex is composed of EccB5, EccC5, EccD5 and EccE5.

The protein localises to the cell inner membrane. Functionally, part of the ESX-5 specialized secretion system, which is responsible for the secretion of EsxN and a number of PE_PGRS and PPE proteins. This component is essential for ESX-5 complex stability and secretion. The chain is ESX-5 secretion system protein EccD5 from Mycobacterium marinum (strain ATCC BAA-535 / M).